Reading from the N-terminus, the 189-residue chain is GMP synthase [glutamine-hydrolyzing] subunit A (189 aa).

A Glutamine amidotransferase type-1 domain is found at 5–189 (KILVVNNYGQ…TNFLEICEKY (185 aa)). Cys-79 serves as the catalytic Nucleophile. Residues His-166 and Glu-168 contribute to the active site.

As to quaternary structure, heterodimer composed of a glutamine amidotransferase subunit (A) and a GMP-binding subunit (B).

The enzyme catalyses XMP + L-glutamine + ATP + H2O = GMP + L-glutamate + AMP + diphosphate + 2 H(+). Its pathway is purine metabolism; GMP biosynthesis; GMP from XMP (L-Gln route): step 1/1. Functionally, catalyzes the synthesis of GMP from XMP. This chain is GMP synthase [glutamine-hydrolyzing] subunit A, found in Methanosarcina barkeri (strain Fusaro / DSM 804).